The following is a 257-amino-acid chain: UPF0246 protein BAV2675 (257 aa).

This sequence belongs to the UPF0246 family.

The protein is UPF0246 protein BAV2675 of Bordetella avium (strain 197N).